A 212-amino-acid polypeptide reads, in one-letter code: GTP-binding protein EngB (212 aa).

Positions 36–212 (TAPEVAFAGR…LRAAVYDAII (177 aa)) constitute an EngB-type G domain. GTP is bound by residues 44 to 51 (GRSNVGKS), 71 to 75 (GRTQE), 91 to 94 (DMPG), 158 to 161 (TKSD), and 192 to 194 (TSS). Mg(2+) contacts are provided by Ser51 and Thr73.

It belongs to the TRAFAC class TrmE-Era-EngA-EngB-Septin-like GTPase superfamily. EngB GTPase family. The cofactor is Mg(2+).

In terms of biological role, necessary for normal cell division and for the maintenance of normal septation. The protein is GTP-binding protein EngB of Zymomonas mobilis subsp. mobilis (strain ATCC 31821 / ZM4 / CP4).